A 454-amino-acid polypeptide reads, in one-letter code: uncharacterized protein (454 aa).

125 to 132 is an ATP binding site; sequence GDVGCGKT.

This sequence belongs to the AFG1 ATPase family.

This is an uncharacterized protein from Schizosaccharomyces pombe (strain 972 / ATCC 24843) (Fission yeast).